A 134-amino-acid polypeptide reads, in one-letter code: MSPVHRSRTSQTQEAHKPTSTLSFISPPQPPRQDPKSPHILCSQPNACSRQSHVSYPNPWGLPCSQSKVSPPGTATNPNPKEWSRISGPPVSLDPQPWSSAPFKPTAQLPLLAQSLGPPAKPALPDPALPLQML.

Residues 1 to 134 (MSPVHRSRTS…PDPALPLQML (134 aa)) form a disordered region. 3 stretches are compositionally biased toward polar residues: residues 9 to 24 (TSQT…TLSF), 43 to 55 (SQPN…SHVS), and 64 to 79 (CSQS…TNPN). A compositionally biased stretch (pro residues) spans 119–128 (PAKPALPDPA).

As to expression, abundant expression is found in prostate, restricted to cells of epithelial origin in normal and diseased glands. Very low expression is detected in pancreas and ovary.

Its subcellular location is the cytoplasm. The protein localises to the nucleus. The protein is Putative protein KRIP1 (KLKP1) of Homo sapiens (Human).